The following is a 98-amino-acid chain: Putative septation protein SpoVG (98 aa).

This sequence belongs to the SpoVG family.

In terms of biological role, essential for sporulation. Interferes with or is a negative regulator of the pathway leading to asymmetric septation. The chain is Putative septation protein SpoVG from Bacillus pumilus (strain SAFR-032).